A 36-amino-acid chain; its full sequence is Photosystem I reaction center subunit VIII (36 aa).

A helical membrane pass occupies residues F4 to A24.

It belongs to the PsaI family.

It is found in the plastid. Its subcellular location is the chloroplast thylakoid membrane. May help in the organization of the PsaL subunit. The chain is Photosystem I reaction center subunit VIII from Piper cenocladum (Ant piper).